We begin with the raw amino-acid sequence, 379 residues long: Protein RecA (379 aa).

79–86 (GPESSGKT) contributes to the ATP binding site.

It belongs to the RecA family.

The protein resides in the cytoplasm. Functionally, can catalyze the hydrolysis of ATP in the presence of single-stranded DNA, the ATP-dependent uptake of single-stranded DNA by duplex DNA, and the ATP-dependent hybridization of homologous single-stranded DNAs. It interacts with LexA causing its activation and leading to its autocatalytic cleavage. In Streptococcus agalactiae, this protein is Protein RecA.